Reading from the N-terminus, the 448-residue chain is Adenylosuccinate synthetase (448 aa).

GTP contacts are provided by residues Gly-36–Lys-42 and Gly-64–Thr-66. Asp-37 acts as the Proton acceptor in catalysis. Residues Asp-37 and Gly-64 each contribute to the Mg(2+) site. Residues Asp-37–Lys-40, Asn-62–His-65, Thr-154, Arg-168, Asn-246, Thr-261, and Arg-325 contribute to the IMP site. The active-site Proton donor is His-65. Val-321–Arg-327 serves as a coordination point for substrate. GTP is bound by residues Arg-327, Lys-353–Asp-355, and Gly-436–Gly-438.

It belongs to the adenylosuccinate synthetase family. In terms of assembly, homodimer. Requires Mg(2+) as cofactor.

It is found in the cytoplasm. It carries out the reaction IMP + L-aspartate + GTP = N(6)-(1,2-dicarboxyethyl)-AMP + GDP + phosphate + 2 H(+). It functions in the pathway purine metabolism; AMP biosynthesis via de novo pathway; AMP from IMP: step 1/2. Plays an important role in the de novo pathway and in the salvage pathway of purine nucleotide biosynthesis. Catalyzes the first committed step in the biosynthesis of AMP from IMP. In Drosophila mojavensis (Fruit fly), this protein is Adenylosuccinate synthetase.